A 129-amino-acid polypeptide reads, in one-letter code: uncharacterized protein (129 aa).

This is an uncharacterized protein from Lepidoptera (butterflies and moths).